A 483-amino-acid chain; its full sequence is MLTLDTLNTMLAVSEEGMVEEMILALLASPQLVIFFEKFPRLKNAVTADLPRWREALRSRLKDAHVPPELTEEVMCYQQSQLLSTPQFIVQLPQILALLHRLHSPYAAQAKQLTESNSTFTPALHTLFLQRWRLSLVVQATTLNQQLLEEEREQLLSDVQERMTLSGQLEPTLAENDNAAGRLWDMSAGQLKRGDYQLIVKYGEFLAAQPELMQLAEQLGRSREAKSVPKKDAPMETFRTLVREPATVPEQVDGIQQGDDILRLLPPELATLGITELEYEFYRRLVEKQLLTYRLHGEAWREKVTERPVVHQDVDEQPRGPFIVCVDTSGSMGGFNEQCAKAFCLALMRVALADNRRCFIMLFSTDVVRYELSGPEGIEQAIRFLSQRFRGGTDIASCFRAIIERMQGREWFDADAVVISDFIAQRLPDDVVSKVGELQRLHQHRFHAVAMSAHGKPGIMRIFDHIWRFDTGMRSRLLRRWRR.

It belongs to the ViaA family. Homodimer. Interacts with RavA.

Its subcellular location is the cytoplasm. Functionally, component of the RavA-ViaA chaperone complex, which may act on the membrane to optimize the function of some of the respiratory chains. ViaA stimulates the ATPase activity of RavA. This chain is Regulatory protein ViaA, found in Salmonella heidelberg (strain SL476).